The sequence spans 531 residues: ATP synthase subunit beta (531 aa).

Residues 1–48 are disordered; sequence MVKAVTSSKETAKVEKKKSAPRSGVKKAVSKSQAGVKDSSSPVHKSSK. Positions 19-29 are enriched in basic residues; it reads SAPRSGVKKAV. The segment covering 30–44 has biased composition (polar residues); sequence SKSQAGVKDSSSPVH. 203–210 provides a ligand contact to ATP; sequence GGAGVGKT.

It belongs to the ATPase alpha/beta chains family. In terms of assembly, F-type ATPases have 2 components, CF(1) - the catalytic core - and CF(0) - the membrane proton channel. CF(1) has five subunits: alpha(3), beta(3), gamma(1), delta(1), epsilon(1). CF(0) has three main subunits: a(1), b(2) and c(9-12). The alpha and beta chains form an alternating ring which encloses part of the gamma chain. CF(1) is attached to CF(0) by a central stalk formed by the gamma and epsilon chains, while a peripheral stalk is formed by the delta and b chains.

The protein resides in the cell inner membrane. It carries out the reaction ATP + H2O + 4 H(+)(in) = ADP + phosphate + 5 H(+)(out). Produces ATP from ADP in the presence of a proton gradient across the membrane. The catalytic sites are hosted primarily by the beta subunits. The sequence is that of ATP synthase subunit beta from Bartonella henselae (strain ATCC 49882 / DSM 28221 / CCUG 30454 / Houston 1) (Rochalimaea henselae).